Consider the following 257-residue polypeptide: Pimeloyl-[acyl-carrier protein] methyl ester esterase (257 aa).

Positions 16-242 (LVLLHGWGLN…AAHAPFISHP (227 aa)) constitute an AB hydrolase-1 domain. Residues W22, 82–83 (SL), and 143–147 (FLGLQ) each bind substrate. S82 functions as the Nucleophile in the catalytic mechanism. Catalysis depends on residues D207 and H235. H235 provides a ligand contact to substrate.

This sequence belongs to the AB hydrolase superfamily. Carboxylesterase BioH family. Monomer.

It localises to the cytoplasm. It carries out the reaction 6-carboxyhexanoyl-[ACP] methyl ester + H2O = 6-carboxyhexanoyl-[ACP] + methanol + H(+). The protein operates within cofactor biosynthesis; biotin biosynthesis. Its function is as follows. The physiological role of BioH is to remove the methyl group introduced by BioC when the pimeloyl moiety is complete. It allows to synthesize pimeloyl-ACP via the fatty acid synthetic pathway through the hydrolysis of the ester bonds of pimeloyl-ACP esters. This chain is Pimeloyl-[acyl-carrier protein] methyl ester esterase, found in Sodalis glossinidius (strain morsitans).